A 735-amino-acid polypeptide reads, in one-letter code: MSSNLTSNEMSSTSAIVEPPEAVKGNERDKSTRRSTSQVVRPEKHEVENALEDQCSSSSLPKEAQYYAKLDKKLEGKDPRSQFYEAVRLSADIFAHKFEKAVCSRQTFEPTNSIIKVLNTAEEEMLHEKVVPLPVSSKLQYYLNRGRYDTIFDRDEQLQRTADPMADEPDHVEKRVTSILEQASREMEEGEVEPVFYDGSDEDQELPIDLGAMRNLQRTNKFAARSSRMAARRGGRPGYRGAFRGAARGAPSRRPAPAAEVAPETPVAAPMAPAAPAAPATPEAAPAAEVMDTSIATEMPQESAVDLSNVSAATEMDTSKEGEASRPTSEKKKKIRTTEMDRLMSMDLGPKDGGRVGELGHMWPESRRRPAAPLPETPAAQPRKSLPRRAAEKKKPEDSDAAEEQEVEMEVDNDASTSTPRNARGGRGGGNRRGSRRGQKRTSGGSGKLVEPKKEPVDEPAEKIPKRSEAAPEVPATATTKEAPPSTSSSPPDAPATPATPASSDSRDSPRKIRAMIFSLTGSPPESETPPVLQQEQVISTAAPTAGRHPNIIQQVPHINRIPPQPLRRLTAPQAPPASQPEEPPVQQTVPVVKVELASAPAPIVRDPQSTEPVPPAMPTLVENNHEATLILPPNKTSDYTRWNAQDLINWVRLLITNNVDSTIAIMVREEFDGETLACLVLDDDFRKEVPIPYGHYKKMKIYGTEVLNHYRTEKYQADLRKFHEELAAWKAQQR.

Residues 1–15 (MSSNLTSNEMSSTSA) are compositionally biased toward polar residues. Disordered stretches follow at residues 1 to 59 (MSSN…SSSS), 223 to 288 (AARS…APAA), and 300 to 534 (PQES…PVLQ). An RNA-binding region spans residues 224-503 (ARSSRMAARR…APATPATPAS (280 aa)). The segment covering 239-288 (YRGAFRGAARGAPSRRPAPAAEVAPETPVAAPMAPAAPAAPATPEAAPAA) has biased composition (low complexity). 2 stretches are compositionally biased toward basic and acidic residues: residues 317 to 355 (DTSKEGEASRPTSEKKKKIRTTEMDRLMSMDLGPKDGGR) and 389 to 398 (RAAEKKKPED). Positions 399 to 413 (SDAAEEQEVEMEVDN) are enriched in acidic residues. The span at 450-470 (VEPKKEPVDEPAEKIPKRSEA) shows a compositional bias: basic and acidic residues. Over residues 471-504 (APEVPATATTKEAPPSTSSSPPDAPATPATPASS) the composition is skewed to low complexity. Positions 520 to 534 (LTGSPPESETPPVLQ) are enriched in polar residues. Residues 621–712 (LVENNHEATL…YGTEVLNHYR (92 aa)) form an SAM-like region.

As to quaternary structure, homodimer. Interacts with ubc-9. Binds through its N-terminal region to the N-terminal region of sor-1. In terms of processing, sumoylated by ubc-9. Sumoylation is required for the transcriptional regulation of homeotic genes. In terms of tissue distribution, widely expressed. Weakly expressed in most somatic cells of 50-cell stage embryos. At 200 cell stage, it is strongly expressed. By comma stage, it is expressed in most somatic cells.

The protein resides in the nucleus. Polycomb group (PcG) protein. PcG proteins act by forming multiprotein complexes, which are required to maintain the transcriptionally repressive state of homeotic genes throughout development. PcG proteins are not required to initiate repression, but to maintain it during later stages of development. Also required to repress expression of other genes and for localization of sor-1. Binds RNA. This Caenorhabditis elegans protein is Polycomb protein sop-2 (sop-2).